Here is a 365-residue protein sequence, read N- to C-terminus: 3-dehydroquinate synthase (365 aa).

NAD(+) contacts are provided by residues 106 to 110, 130 to 131, Lys142, Lys151, and 169 to 172; these read GVIGD, TT, and FFAT. Zn(2+)-binding residues include Glu184, His247, and His264.

This sequence belongs to the sugar phosphate cyclases superfamily. Dehydroquinate synthase family. Co(2+) is required as a cofactor. The cofactor is Zn(2+). NAD(+) serves as cofactor.

Its subcellular location is the cytoplasm. The enzyme catalyses 7-phospho-2-dehydro-3-deoxy-D-arabino-heptonate = 3-dehydroquinate + phosphate. Its pathway is metabolic intermediate biosynthesis; chorismate biosynthesis; chorismate from D-erythrose 4-phosphate and phosphoenolpyruvate: step 2/7. Catalyzes the conversion of 3-deoxy-D-arabino-heptulosonate 7-phosphate (DAHP) to dehydroquinate (DHQ). The polypeptide is 3-dehydroquinate synthase (Listeria monocytogenes serotype 4a (strain HCC23)).